The chain runs to 592 residues: Glutathione-regulated potassium-efflux system protein KefB (592 aa).

A run of 13 helical transmembrane segments spans residues 4–24 (SDFLLAGVLFLFAAVAAVPLA), 29–49 (IGAVLGYLLAGIAIGPWGLGF), 55–75 (EILHFSELGVVFLMFIIGLEL), 87–107 (IFGVGAAQVLLSAALLAGLLM), 115–135 (AAVVGGIGLAMSSTAMALQLM), 152–172 (VLLFQDLAVIPALALVPLLAG), 177–197 (HFDWMKIGMKVLAFVGMLIGG), 207–227 (FIAASGVREVFTAATLLLVLG), 230–250 (LFMDALGLSMALGTFIAGVLL), 268–288 (GLLLGLFFISVGMSLNLGVLY), 291–311 (LLWVVISVVVLVAVKILVLYL), 324–344 (MQFAGVLSQGGEFAFVLFSTA), and 356–376 (ALLLVTVTLSMMTTPLLMKLV). The region spanning 400–519 (KPQVIVVGFG…AGVTQFSRET (120 aa)) is the RCK N-terminal domain.

It belongs to the monovalent cation:proton antiporter 2 (CPA2) transporter (TC 2.A.37) family. KefB subfamily. Interacts with the regulatory subunit KefG.

The protein resides in the cell inner membrane. Its function is as follows. Pore-forming subunit of a potassium efflux system that confers protection against electrophiles. Catalyzes K(+)/H(+) antiport. The protein is Glutathione-regulated potassium-efflux system protein KefB of Escherichia coli O157:H7.